The following is a 225-amino-acid chain: MASSSLFLLASLLVLASWQQAIAFDPSPLQDFCVADMASPVRVNGFPCKNPMNVTSDDFFNAAKFDMPRNTMNKVGSNVTNLNVINFPGLNTLGISLARIDYAPMGVNPPHVHPRATELLTVLEGTLYVGFVTSNPNRLFSKVVHKGDVFVFPKAMIHFQMNLDHNKPAVAQSALSSQNPGVITIASAIFGSTPPISDDVLVKAFQVEKKVIDWLKSQFSENNHY.

A signal peptide spans 1 to 23; it reads MASSSLFLLASLLVLASWQQAIA. Cys33 and Cys48 are disulfide-bonded. N-linked (GlcNAc...) asparagine glycosylation is found at Asn53 and Asn78. One can recognise a Cupin type-1 domain in the interval 60-213; sequence FNAAKFDMPR…AFQVEKKVID (154 aa). Mn(2+)-binding residues include His111, His113, Glu118, and His158.

This sequence belongs to the germin family. As to quaternary structure, oligomer (believed to be a pentamer but probably hexamer).

The protein resides in the secreted. The protein localises to the extracellular space. It is found in the apoplast. Functionally, plays a role in broad-spectrum disease resistance. Probably has no oxalate oxidase activity even if the active site is conserved. This Oryza sativa subsp. japonica (Rice) protein is Germin-like protein 8-3 (GER2).